The following is an 884-amino-acid chain: Schlafen family member 5 (884 aa).

574–581 (GLPGSGKT) is an ATP binding site.

Belongs to the Schlafen family. Subgroup III subfamily.

Functionally, may have a role in hematopoietic cell differentiation. This is Schlafen family member 5 (Slfn5) from Mus musculus (Mouse).